Reading from the N-terminus, the 255-residue chain is 5'-nucleotidase SurE (255 aa).

Residues aspartate 8, aspartate 9, serine 40, and asparagine 95 each contribute to the a divalent metal cation site.

This sequence belongs to the SurE nucleotidase family. Requires a divalent metal cation as cofactor.

The protein resides in the cytoplasm. The catalysed reaction is a ribonucleoside 5'-phosphate + H2O = a ribonucleoside + phosphate. In terms of biological role, nucleotidase that shows phosphatase activity on nucleoside 5'-monophosphates. The sequence is that of 5'-nucleotidase SurE from Solidesulfovibrio magneticus (strain ATCC 700980 / DSM 13731 / RS-1) (Desulfovibrio magneticus).